Here is an 87-residue protein sequence, read N- to C-terminus: Small ribosomal subunit protein bS20 (87 aa).

Positions 1-29 (MANTAQARKRARQAVKQNAHNSSQRSTLR) are disordered. Residues 20-29 (HNSSQRSTLR) show a composition bias toward polar residues.

This sequence belongs to the bacterial ribosomal protein bS20 family.

Functionally, binds directly to 16S ribosomal RNA. This Janthinobacterium sp. (strain Marseille) (Minibacterium massiliensis) protein is Small ribosomal subunit protein bS20.